The sequence spans 506 residues: Maturase K (506 aa).

Belongs to the intron maturase 2 family. MatK subfamily.

The protein resides in the plastid. The protein localises to the chloroplast. In terms of biological role, usually encoded in the trnK tRNA gene intron. Probably assists in splicing its own and other chloroplast group II introns. The protein is Maturase K of Rhododendron tomentosum (Marsh Labrador tea).